A 210-amino-acid polypeptide reads, in one-letter code: Large ribosomal subunit protein bL25 (210 aa).

The disordered stretch occupies residues 179–210; it reads LPPQQEEEIHSGEQQEPGHPDAEEGRETTPES. A compositionally biased stretch (basic and acidic residues) spans 185–210; it reads EEIHSGEQQEPGHPDAEEGRETTPES.

This sequence belongs to the bacterial ribosomal protein bL25 family. CTC subfamily. Part of the 50S ribosomal subunit; part of the 5S rRNA/L5/L18/L25 subcomplex. Contacts the 5S rRNA. Binds to the 5S rRNA independently of L5 and L18.

This is one of the proteins that binds to the 5S RNA in the ribosome where it forms part of the central protuberance. The polypeptide is Large ribosomal subunit protein bL25 (Geobacillus sp. (strain WCH70)).